A 562-amino-acid chain; its full sequence is Proton channel OTOP2 (562 aa).

A disordered region spans residues methionine 1–proline 20. 12 helical membrane passes run leucine 30–glycine 50, valine 62–leucine 82, proline 100–phenylalanine 120, isoleucine 137–serine 157, threonine 169–valine 189, phenylalanine 241–methionine 261, phenylalanine 289–isoleucine 309, alanine 324–leucine 344, leucine 371–valine 391, leucine 402–isoleucine 422, aspartate 495–alanine 515, and phenylalanine 527–tyrosine 547.

Belongs to the otopetrin family.

It localises to the cell membrane. The enzyme catalyses H(+)(in) = H(+)(out). Its activity is regulated as follows. Actives at neutral and alkaline extracellular pH, acid extracellular pH appears to inhibit the channel. Insensitive to activation by Zn(2+). Proton-selective ion channel open at neutral pH. Actives at neutral and alkaline extracellular pH, likely participates in some alkali-related physiological activities. The polypeptide is Proton channel OTOP2 (Homo sapiens (Human)).